The chain runs to 144 residues: MPNTARWAVTLTLTATAVCGPLAGASLATPNAAASGLYAPSALVLTTGHGQSAATATPERAVTLNCAPTASGTHPAAVSACAELRATGGDFDALSARSDAMCTRQYDPVVVTVEGVWQGKRVAYERTFANECVKNSYGTTVFTF.

An N-terminal signal peptide occupies residues 1–34 (MPNTARWAVTLTLTATAVCGPLAGASLATPNAAA). 2 disulfides stabilise this stretch: cysteine 66-cysteine 81 and cysteine 102-cysteine 132.

The protein belongs to the protease inhibitor I16 (SSI) family. In terms of assembly, homodimer.

It localises to the secreted. Strong inhibitor of bacterial serine proteases such as subtilisin. This chain is Probable subtilase-type protease inhibitor (sti1), found in Streptomyces avermitilis (strain ATCC 31267 / DSM 46492 / JCM 5070 / NBRC 14893 / NCIMB 12804 / NRRL 8165 / MA-4680).